We begin with the raw amino-acid sequence, 257 residues long: Enterotoxin type A (257 aa).

An N-terminal signal peptide occupies residues 1–24; that stretch reads MKKTAFTLLLFIALTLTTSPLVNG. Cysteine 120 and cysteine 130 are joined by a disulfide. Zn(2+)-binding residues include histidine 211, histidine 249, and aspartate 251.

It belongs to the staphylococcal/streptococcal toxin family. Monomer. Interacts with MHC class II molecules alpha/HLA-DRB1 and beta/HLA-DRA chains. The interaction with MHC-II molecules occurs at both zinc-dependent and zinc-independent sites. Interacts with T-cell receptor beta variable 7-9/TRBV7-9. Zn(2+) is required as a cofactor.

The protein localises to the secreted. Staphylococcal enterotoxin that activates the host immune system by binding as unprocessed molecules to major histocompatibility (MHC) complex class II and T-cell receptor (TCR) molecules. In turn, waves of cellular activation, cytokine production, and migration into the lung tissue and airways occur via alphabeta T-cells. Also causes the intoxication staphylococcal food poisoning syndrome. The illness is characterized by high fever, hypotension, diarrhea, shock, and in some cases death. This Staphylococcus aureus protein is Enterotoxin type A (entA).